The sequence spans 162 residues: Nucleotide-binding protein A2cp1_0112 (162 aa).

It belongs to the YajQ family.

Nucleotide-binding protein. The sequence is that of Nucleotide-binding protein A2cp1_0112 from Anaeromyxobacter dehalogenans (strain 2CP-1 / ATCC BAA-258).